The chain runs to 109 residues: Small ribosomal subunit protein bS18c (109 aa).

The disordered stretch occupies residues 82–109 (GFERSESTPRTNALKPRNKNKQNNQTQF).

The protein belongs to the bacterial ribosomal protein bS18 family. In terms of assembly, part of the 30S ribosomal subunit.

It is found in the plastid. The polypeptide is Small ribosomal subunit protein bS18c (Cuscuta reflexa (Southern Asian dodder)).